We begin with the raw amino-acid sequence, 105 residues long: MIASKFGIGQQVRHSLLGYLGVVVDIDPVYSLSEPSPDELAVNDELRAAPWYHVVMEDDNGLPVHTYLAEAQLSSELQDEHPEQPSMDELAQTIRKQLQAPRLRN.

The interval 75-105 is disordered; that stretch reads SELQDEHPEQPSMDELAQTIRKQLQAPRLRN.

This sequence belongs to the HspQ family.

The protein resides in the cytoplasm. Involved in the degradation of certain denaturated proteins, including DnaA, during heat shock stress. In Escherichia coli O127:H6 (strain E2348/69 / EPEC), this protein is Heat shock protein HspQ.